Here is a 186-residue protein sequence, read N- to C-terminus: Peptidyl-tRNA hydrolase (186 aa).

Tyr14 contacts tRNA. His19 (proton acceptor) is an active-site residue. Positions 65, 67, and 113 each coordinate tRNA.

It belongs to the PTH family. In terms of assembly, monomer.

It is found in the cytoplasm. The enzyme catalyses an N-acyl-L-alpha-aminoacyl-tRNA + H2O = an N-acyl-L-amino acid + a tRNA + H(+). Functionally, hydrolyzes ribosome-free peptidyl-tRNAs (with 1 or more amino acids incorporated), which drop off the ribosome during protein synthesis, or as a result of ribosome stalling. Its function is as follows. Catalyzes the release of premature peptidyl moieties from peptidyl-tRNA molecules trapped in stalled 50S ribosomal subunits, and thus maintains levels of free tRNAs and 50S ribosomes. This Limosilactobacillus fermentum (strain NBRC 3956 / LMG 18251) (Lactobacillus fermentum) protein is Peptidyl-tRNA hydrolase.